The chain runs to 1408 residues: DNA-directed RNA polymerase subunit beta' (1408 aa).

Zn(2+) is bound by residues C70, C72, C85, and C88. Mg(2+) is bound by residues D460, D462, and D464. Zn(2+)-binding residues include C814, C888, C895, and C898.

This sequence belongs to the RNA polymerase beta' chain family. The RNAP catalytic core consists of 2 alpha, 1 beta, 1 beta' and 1 omega subunit. When a sigma factor is associated with the core the holoenzyme is formed, which can initiate transcription. Mg(2+) serves as cofactor. Requires Zn(2+) as cofactor.

It catalyses the reaction RNA(n) + a ribonucleoside 5'-triphosphate = RNA(n+1) + diphosphate. In terms of biological role, DNA-dependent RNA polymerase catalyzes the transcription of DNA into RNA using the four ribonucleoside triphosphates as substrates. The protein is DNA-directed RNA polymerase subunit beta' of Serratia proteamaculans (strain 568).